Here is a 283-residue protein sequence, read N- to C-terminus: MPGHELEDVINQRLNLYDVLELPTPLDVHTIYDDLPQIKRKYRTLALKYHPDKHPDNPSIIHKFHLLSTATNILTNADVRPHYDRWLIEFLRKTNDIERNKLIQKLEESESSTIPTTTPHPDLLQIQRHGELLRKLKHFNLPYGDWKHLNTQDQENASQHPYYDCSTLRIVLDNFLQSNNKSNCLSHLRNQVFITLSANEIYDIYFSERNNYSKDDSIIIYTVFDTPITAQHVFRNWSSGNLIPTVKDISPLIPLHYYSDFNLETELNDDIARLVSNEPILLD.

The J domain occupies 15–87 (NLYDVLELPT…DVRPHYDRWL (73 aa)).

It belongs to the DnaJ family. In terms of assembly, belongs to the CWC complex (or CEF1-associated complex), a spliceosome sub-complex reminiscent of a late-stage spliceosome composed of the U2, U5 and U6 snRNAs and at least BUD13, BUD31, BRR2, CDC40, CEF1, CLF1, CUS1, CWC2, CWC15, CWC21, CWC22, CWC23, CWC24, CWC25, CWC27, ECM2, HSH155, IST3, ISY1, LEA1, MSL1, NTC20, PRP8, PRP9, PRP11, PRP19, PRP21, PRP22, PRP45, PRP46, SLU7, SMB1, SMD1, SMD2, SMD3, SMX2, SMX3, SNT309, SNU114, SPP2, SYF1, SYF2, RSE1 and YJU2.

It is found in the cytoplasm. Its subcellular location is the nucleus. Involved in pre-mRNA splicing. May be involved in endoplasmic reticulum-associated protein degradation (ERAD) and required for growth at low and high temperatures. This chain is Pre-mRNA-splicing factor CWC23 (CWC23), found in Saccharomyces cerevisiae (strain ATCC 204508 / S288c) (Baker's yeast).